The following is a 533-amino-acid chain: Non-specific phospholipase C1 (533 aa).

Positions 1–22 (MAFRRVLTTVILFCYLLISSQS) are cleaved as a signal peptide.

Belongs to the bacterial phospholipase C family. Expressed in roots, leaves, stems, flowers and siliques.

Its subcellular location is the secreted. The chain is Non-specific phospholipase C1 (NPC1) from Arabidopsis thaliana (Mouse-ear cress).